The chain runs to 318 residues: Thymidylate synthase (318 aa).

DUMP contacts are provided by residues Arg-25 and 180-181; that span reads RR. The active-site Nucleophile is the Cys-200. DUMP contacts are provided by residues 220–223, Asn-231, and 261–263; these read RSGD and HIY. Asp-223 contacts (6R)-5,10-methylene-5,6,7,8-tetrahydrofolate. Position 317 (Ala-317) interacts with (6R)-5,10-methylene-5,6,7,8-tetrahydrofolate.

Belongs to the thymidylate synthase family. Bacterial-type ThyA subfamily. As to quaternary structure, homodimer.

Its subcellular location is the cytoplasm. The enzyme catalyses dUMP + (6R)-5,10-methylene-5,6,7,8-tetrahydrofolate = 7,8-dihydrofolate + dTMP. The protein operates within pyrimidine metabolism; dTTP biosynthesis. Functionally, catalyzes the reductive methylation of 2'-deoxyuridine-5'-monophosphate (dUMP) to 2'-deoxythymidine-5'-monophosphate (dTMP) while utilizing 5,10-methylenetetrahydrofolate (mTHF) as the methyl donor and reductant in the reaction, yielding dihydrofolate (DHF) as a by-product. This enzymatic reaction provides an intracellular de novo source of dTMP, an essential precursor for DNA biosynthesis. In Lactobacillus helveticus (strain DPC 4571), this protein is Thymidylate synthase.